The following is a 1448-amino-acid chain: Glutamate receptor ionotropic, NMDA 2B (1448 aa).

The first 24 residues, 1–24 (MRPTEACCYLKISLIILFYMGCYA), serve as a signal peptide directing secretion. The Extracellular portion of the chain corresponds to 25–554 (QKHPNMDIAV…SAFLEPFSAD (530 aa)). Cysteine 81 and cysteine 316 are oxidised to a cystine. Positions 122 and 279 each coordinate Zn(2+). A glycan (N-linked (GlcNAc...) asparagine) is linked at asparagine 336. Intrachain disulfides connect cysteine 426–cysteine 453 and cysteine 433–cysteine 454. 2 residues coordinate L-glutamate: threonine 511 and arginine 516. A helical transmembrane segment spans residues 555–573 (VWVMMFVMLLIVSAVAVFV). Residues 574-600 (FEYFSPVGYNRCLADGREPGGPSFTIG) are Cytoplasmic-facing. The segment at residues 601–620 (KAIWLLWGLVFNNSVPVQNP) is an intramembrane region (discontinuously helical). A pore-forming region spans residues 601–620 (KAIWLLWGLVFNNSVPVQNP). Topologically, residues 621–627 (KGTTSKI) are cytoplasmic. Residues 628 to 643 (MVSVWAFFAVIFLASY) traverse the membrane as a helical segment. At 644 to 819 (TANLAAFMIQ…LDIDNMAGVF (176 aa)) the chain is on the extracellular side. Residue asparagine 685 is glycosylated (N-linked (GlcNAc...) asparagine). L-glutamate is bound by residues 687 to 688 (ST) and aspartate 729. A disulfide bridge links cysteine 743 with cysteine 798. A helical transmembrane segment spans residues 820-839 (YMLAAAMALSLITFIMEHLF). Over 840–1448 (FWQLRHCFMG…EKLSSIESDV (609 aa)) the chain is Cytoplasmic. Polar residues predominate over residues 1254-1265 (APNSKYPQSPNG). The disordered stretch occupies residues 1254–1277 (APNSKYPQSPNGKAQKRNRSKLHR). A compositionally biased stretch (basic residues) spans 1267–1277 (AQKRNRSKLHR).

Belongs to the glutamate-gated ion channel (TC 1.A.10.1) family. NR2B/GRIN2B subfamily. Heterotetramer. Forms heterotetrameric channels composed of two GluN1/zeta subunits (GRIN1), and two identical GluN2/epsilon subunits (GRIN2A, GRIN2B, GRIN2C or GRIN2D) or GluN3 subunits (GRIN3A or GRIN3B) (in vitro). In vivo, the subunit composition may depend on the expression levels of the different subunits. Detected in oocytes.

It localises to the cell membrane. The protein localises to the postsynaptic cell membrane. The enzyme catalyses Ca(2+)(in) = Ca(2+)(out). It catalyses the reaction Na(+)(in) = Na(+)(out). The catalysed reaction is K(+)(in) = K(+)(out). In terms of biological role, component of N-methyl-D-aspartate (NMDA) receptors (NMDARs) that function as heterotetrameric, ligand-gated cation channels with high calcium permeability and voltage-dependent block by Mg(2+). Channel activation requires binding of the neurotransmitter L-glutamate to the GluN2 subunit, glycine binding to the GluN1 subunit, plus membrane depolarization to eliminate channel inhibition by Mg(2+). NMDARs mediate simultaneously the potasium efflux and the influx of calcium and sodium. Each GluN2 subunit confers differential attributes to channel properties, including activation, deactivation and desensitization kinetics, pH sensitivity, Ca2(+) permeability, and binding to allosteric modulators. This is Glutamate receptor ionotropic, NMDA 2B from Xenopus laevis (African clawed frog).